The primary structure comprises 418 residues: Voltage-gated ClC-type chloride channel ClcB (418 aa).

10 helical membrane-spanning segments follow: residues 5 to 25 (LLIA…FRHA), 54 to 74 (LLTP…WQKF), 146 to 166 (LWIA…PLAG), 168 to 188 (LFIA…PVII), 222 to 242 (ALII…LTLM), 258 to 278 (WQLA…PAVW), 291 to 311 (APPL…AVLA), 316 to 336 (GAPG…GMLY), 352 to 372 (LLLG…APIM), and 380 to 400 (MTGE…ASVI).

This sequence belongs to the chloride channel (TC 2.A.49) family. ClcB subfamily.

The protein resides in the cell inner membrane. Functionally, probably acts as an electrical shunt for an outwardly-directed proton pump that is linked to amino acid decarboxylation, as part of the extreme acid resistance (XAR) response. The chain is Voltage-gated ClC-type chloride channel ClcB from Escherichia coli (strain ATCC 8739 / DSM 1576 / NBRC 3972 / NCIMB 8545 / WDCM 00012 / Crooks).